The primary structure comprises 180 residues: Regulator of G-protein signaling 8 (180 aa).

A Phosphoserine modification is found at serine 26. The 116-residue stretch at 56-171 folds into the RGS domain; that stretch reads SFDVLLSHKY…FLRSKMYLDL (116 aa).

As to quaternary structure, interacts with GNAO1 and GNAI3. Expressed at high levels in brain. Very little expression detected in other tissues. Detected in Purkinje cells in the cerebellum.

The protein resides in the cell membrane. It is found in the membrane. The protein localises to the perikaryon. It localises to the cell projection. Its subcellular location is the dendrite. The protein resides in the nucleus. In terms of biological role, regulates G protein-coupled receptor signaling cascades, including signaling via muscarinic acetylcholine receptor CHRM2 and dopamine receptor DRD2. Inhibits signal transduction by increasing the GTPase activity of G protein alpha subunits, thereby driving them into their inactive GDP-bound form. Modulates the activity of potassium channels that are activated in response to DRD2 and CHRM2 signaling. This Rattus norvegicus (Rat) protein is Regulator of G-protein signaling 8 (Rgs8).